A 537-amino-acid polypeptide reads, in one-letter code: Zinc finger protein 835 (537 aa).

The disordered stretch occupies residues 12–109 (AELEGNWKHE…RERGGGPKKP (98 aa)). A compositionally biased stretch (polar residues) spans 63-77 (TISSPAATQASVPDD). Positions 89–104 (SPKERHPDSRQRERGG) are enriched in basic and acidic residues. 14 C2H2-type zinc fingers span residues 110–132 (WKCG…QRIH), 138–160 (FACP…QRTH), 166–188 (YACH…WRTH), 194–216 (HRCA…RRVH), 222–244 (YACA…QRIH), 250–272 (YECS…QRIH), 278–300 (YRCG…RRVH), 306–328 (YTCQ…RRIH), 334–356 (YACG…QRTH), 362–384 (YPCH…RLVH), 390–412 (YRCL…QKIH), 418–440 (YKCG…QRTH), 446–468 (YTCP…HIVH), and 474–496 (YECS…QRTH). The interval 497-537 (ADSSGRLCPAPTPDSTPGLSQGGETCQQGCPGRNPRGPAED) is disordered. A compositionally biased stretch (polar residues) spans 509–524 (PDSTPGLSQGGETCQQ).

It belongs to the krueppel C2H2-type zinc-finger protein family.

It localises to the nucleus. Functionally, may be involved in transcriptional regulation. This chain is Zinc finger protein 835 (ZNF835), found in Homo sapiens (Human).